Reading from the N-terminus, the 265-residue chain is tRNA pseudouridine synthase A (265 aa).

The active-site Nucleophile is Asp53. Residue Tyr111 participates in substrate binding.

Belongs to the tRNA pseudouridine synthase TruA family. As to quaternary structure, homodimer.

It catalyses the reaction uridine(38/39/40) in tRNA = pseudouridine(38/39/40) in tRNA. In terms of biological role, formation of pseudouridine at positions 38, 39 and 40 in the anticodon stem and loop of transfer RNAs. This is tRNA pseudouridine synthase A from Acinetobacter baumannii (strain ACICU).